The following is a 101-amino-acid chain: Vacuolar ATPase assembly integral membrane protein VMA21 (101 aa).

Topologically, residues 1-25 are cytoplasmic; it reads MERPDKAALNALQPPEFRNESSLAS. The chain crosses the membrane as a helical span at residues 26 to 46; sequence TLKTLLFFTALMITVPIGLYF. The Lumenal segment spans residues 47 to 65; sequence TTKSYIFEGALGMSNRDSY. The chain crosses the membrane as a helical span at residues 66–86; it reads FYAAIVAVVAVHVVLALFVYV. Residues 87-101 are Cytoplasmic-facing; that stretch reads AWNEGSRQWREGKQD.

Belongs to the VMA21 family. Associates with the V0 complex of the vacuolar ATPase (V-ATPase). Interacts with ATP6AP2.

It is found in the endoplasmic reticulum membrane. The protein localises to the endoplasmic reticulum-Golgi intermediate compartment membrane. The protein resides in the cytoplasmic vesicle. Its subcellular location is the COPII-coated vesicle membrane. Required for the assembly of the V0 complex of the vacuolar ATPase (V-ATPase) in the endoplasmic reticulum. The sequence is that of Vacuolar ATPase assembly integral membrane protein VMA21 from Homo sapiens (Human).